A 316-amino-acid polypeptide reads, in one-letter code: Aspartate carbamoyltransferase catalytic subunit (316 aa).

Residues R58 and T59 each coordinate carbamoyl phosphate. Position 86 (K86) interacts with L-aspartate. Carbamoyl phosphate-binding residues include R108, H136, and Q139. L-aspartate is bound by residues R169 and R223. Carbamoyl phosphate is bound by residues G264 and P265.

Belongs to the aspartate/ornithine carbamoyltransferase superfamily. ATCase family. In terms of assembly, heterododecamer (2C3:3R2) of six catalytic PyrB chains organized as two trimers (C3), and six regulatory PyrI chains organized as three dimers (R2).

The enzyme catalyses carbamoyl phosphate + L-aspartate = N-carbamoyl-L-aspartate + phosphate + H(+). The protein operates within pyrimidine metabolism; UMP biosynthesis via de novo pathway; (S)-dihydroorotate from bicarbonate: step 2/3. In terms of biological role, catalyzes the condensation of carbamoyl phosphate and aspartate to form carbamoyl aspartate and inorganic phosphate, the committed step in the de novo pyrimidine nucleotide biosynthesis pathway. The polypeptide is Aspartate carbamoyltransferase catalytic subunit (Granulibacter bethesdensis (strain ATCC BAA-1260 / CGDNIH1)).